A 221-amino-acid polypeptide reads, in one-letter code: Epididymal secretory glutathione peroxidase (221 aa).

The N-terminal stretch at 1–21 is a signal peptide; it reads MAIQLRVFYLVPLLLASYVQT. Cys73 is an active-site residue.

Belongs to the glutathione peroxidase family. In terms of tissue distribution, epididymis.

The protein localises to the secreted. The catalysed reaction is 2 glutathione + H2O2 = glutathione disulfide + 2 H2O. Functionally, protects cells and enzymes from oxidative damage, by catalyzing the reduction of hydrogen peroxide, lipid peroxides and organic hydroperoxide, by glutathione. May constitute a glutathione peroxidase-like protective system against peroxide damage in sperm membrane lipids. This is Epididymal secretory glutathione peroxidase (Gpx5) from Rattus norvegicus (Rat).